A 215-amino-acid chain; its full sequence is Probable transaldolase (215 aa).

Catalysis depends on lysine 83, which acts as the Schiff-base intermediate with substrate.

This sequence belongs to the transaldolase family. Type 3B subfamily.

The protein resides in the cytoplasm. It catalyses the reaction D-sedoheptulose 7-phosphate + D-glyceraldehyde 3-phosphate = D-erythrose 4-phosphate + beta-D-fructose 6-phosphate. The protein operates within carbohydrate degradation; pentose phosphate pathway; D-glyceraldehyde 3-phosphate and beta-D-fructose 6-phosphate from D-ribose 5-phosphate and D-xylulose 5-phosphate (non-oxidative stage): step 2/3. In terms of biological role, transaldolase is important for the balance of metabolites in the pentose-phosphate pathway. This Clostridium perfringens (strain 13 / Type A) protein is Probable transaldolase.